A 100-amino-acid chain; its full sequence is NADH-quinone oxidoreductase subunit K (100 aa).

The next 3 membrane-spanning stretches (helical) occupy residues 3 to 23, 29 to 49, and 63 to 83; these read PTAYYVALSGLLFAIGMIGVL, IMIFLSVELMLNAANLALVAF, and FIVMTLAAAEVAIGLAIIVAI.

This sequence belongs to the complex I subunit 4L family. NDH-1 is composed of 15 different subunits. Subunits NuoA, H, J, K, L, M, N constitute the membrane sector of the complex.

Its subcellular location is the cell membrane. It carries out the reaction a quinone + NADH + 5 H(+)(in) = a quinol + NAD(+) + 4 H(+)(out). NDH-1 shuttles electrons from NADH, via FMN and iron-sulfur (Fe-S) centers, to quinones in the respiratory chain. The immediate electron acceptor for the enzyme in this species is believed to be a menaquinone. Couples the redox reaction to proton translocation (for every two electrons transferred, four hydrogen ions are translocated across the cytoplasmic membrane), and thus conserves the redox energy in a proton gradient. The chain is NADH-quinone oxidoreductase subunit K from Deinococcus geothermalis (strain DSM 11300 / CIP 105573 / AG-3a).